A 359-amino-acid chain; its full sequence is 4-dedimethylamino-4-oxo-anhydrotetracycline transaminase OxyQ (359 aa).

Positions 32, 92, and 155 each coordinate substrate. Residues Thr-91 to Lys-92, Asn-155, Tyr-186, and Ser-216 to Ser-218 contribute to the pyridoxal 5'-phosphate site. An N6-(pyridoxal phosphate)lysine modification is found at Lys-219. Position 227 (Arg-227) interacts with pyridoxal 5'-phosphate. Arg-341 contributes to the substrate binding site.

Belongs to the class-I pyridoxal-phosphate-dependent aminotransferase family. It depends on pyridoxal 5'-phosphate as a cofactor.

The protein operates within antibiotic biosynthesis; oxytetracycline biosynthesis. Functionally, involved in the biosynthesis of the tetracycline antibiotic, oxytetracycline. Catalyzes the conversion of 4-dedimethylamino-4-oxoanhydrotetracycline to yield 4-amino-4-de(dimethylamino)anhydrotetracycline (4-amino-ATC). The sequence is that of 4-dedimethylamino-4-oxo-anhydrotetracycline transaminase OxyQ from Streptomyces rimosus.